A 320-amino-acid polypeptide reads, in one-letter code: MTNSSSQLAQLKQMTTVVADTGDIEAIAKFQPQDATTNPSLLLKAASLPNYQGLVKDSVAWAKTQSDNAEQQVIDAADKISVLIGLEILKIVPGRISTEVDARLSFDTSASITKAHKLIAMYNEAGISNDRILIKLASTWEGIKAAEQLEQEGINCNLTLLFSFAQARACAEAGAYLISPFVGRILDWYKKDTGRNDYASNEDPGVVSVTSIFNYYKLQGFNTVVMGASFRNIGEILELAGCDRLTISPQLMEELANSTDTVIQKLTACEATAEKEAALSQAEFRWQMNEDPMATEKLAEGIRNFTIDQVKLEKQLTDLL.

Lysine 135 acts as the Schiff-base intermediate with substrate in catalysis.

The protein belongs to the transaldolase family. Type 1 subfamily. As to quaternary structure, homodimer.

Its subcellular location is the cytoplasm. It catalyses the reaction D-sedoheptulose 7-phosphate + D-glyceraldehyde 3-phosphate = D-erythrose 4-phosphate + beta-D-fructose 6-phosphate. It functions in the pathway carbohydrate degradation; pentose phosphate pathway; D-glyceraldehyde 3-phosphate and beta-D-fructose 6-phosphate from D-ribose 5-phosphate and D-xylulose 5-phosphate (non-oxidative stage): step 2/3. Transaldolase is important for the balance of metabolites in the pentose-phosphate pathway. The polypeptide is Transaldolase (Colwellia psychrerythraea (strain 34H / ATCC BAA-681) (Vibrio psychroerythus)).